A 290-amino-acid chain; its full sequence is MIPRVTSTAQTDLTEGADPYGICAADDGALWVTLVHSGAVVRLSADGGRRDYPIGAQARPSVVTVGRDGTAWFTRTGDDRITALDRTGAMTTFELASGSGPFGICVGADGAVWFTESTGDRLGRIDPDATVSYVALPEGCFPAFVAAGADGAVWATLNHADAVVRILPSADPEVIDIPTPGAAPVGITWGGDAVWFVEIATGRIGRIGDDRLVTEFALPDPACRPHAITAGPDGCWFTEWATDRVGHIGRDGTVEEYDLPSSVSEPHGITVAPDGAVWVAAESGSVVRLG.

Position 226 (His226) interacts with substrate. Glu265 serves as a coordination point for Mg(2+). His267 functions as the Proton acceptor in the catalytic mechanism. Glu282 is a Mg(2+) binding site.

It belongs to the Vgb family. Monomer. Mg(2+) serves as cofactor.

Functionally, inactivates the type B streptogramin antibiotics by linearizing the lactone ring at the ester linkage, generating a free phenylglycine carboxylate and converting the threonyl moiety into 2-amino-butenoic acid. The chain is Virginiamycin B lyase from Mycolicibacterium vanbaalenii (strain DSM 7251 / JCM 13017 / BCRC 16820 / KCTC 9966 / NRRL B-24157 / PYR-1) (Mycobacterium vanbaalenii).